The following is a 475-amino-acid chain: Tubulin gamma-1 chain (475 aa).

Residue 142–148 participates in GTP binding; sequence AGGTGSG. Positions 453–475 are disordered; it reads VKRGNGPVDSKSEDSRSVTSAGS.

The protein belongs to the tubulin family. Interacts with Ote.

The protein resides in the cytoplasm. The protein localises to the cytoskeleton. It is found in the microtubule organizing center. Its subcellular location is the centrosome. It localises to the perinuclear region. Its function is as follows. Tubulin is the major constituent of microtubules. The gamma chain is found at microtubule organizing centers (MTOC) such as the spindle poles or the centrosome, suggesting that it is involved in the minus-end nucleation of microtubule assembly. The polypeptide is Tubulin gamma-1 chain (gammaTub23C) (Drosophila melanogaster (Fruit fly)).